A 331-amino-acid chain; its full sequence is tRNA N6-adenosine threonylcarbamoyltransferase (331 aa).

His-109, His-113, and Tyr-130 together coordinate Fe cation. Residues 130–134 (YLSGG), Asp-162, Asp-183, and Ser-262 contribute to the substrate site. Residue Asp-290 coordinates Fe cation.

The protein belongs to the KAE1 / TsaD family. The cofactor is Fe(2+).

The protein resides in the cytoplasm. It catalyses the reaction L-threonylcarbamoyladenylate + adenosine(37) in tRNA = N(6)-L-threonylcarbamoyladenosine(37) in tRNA + AMP + H(+). In terms of biological role, required for the formation of a threonylcarbamoyl group on adenosine at position 37 (t(6)A37) in tRNAs that read codons beginning with adenine. Is probably involved in the transfer of the threonylcarbamoyl moiety of threonylcarbamoyl-AMP (TC-AMP) to the N6 group of A37. In Metallosphaera sedula (strain ATCC 51363 / DSM 5348 / JCM 9185 / NBRC 15509 / TH2), this protein is tRNA N6-adenosine threonylcarbamoyltransferase.